A 450-amino-acid polypeptide reads, in one-letter code: Glucose-6-phosphate isomerase (450 aa).

Thr38 is subject to Phosphothreonine. Glu290 functions as the Proton donor in the catalytic mechanism. Active-site residues include His311 and Lys425.

It belongs to the GPI family.

The protein localises to the cytoplasm. It carries out the reaction alpha-D-glucose 6-phosphate = beta-D-fructose 6-phosphate. Its pathway is carbohydrate biosynthesis; gluconeogenesis. It participates in carbohydrate degradation; glycolysis; D-glyceraldehyde 3-phosphate and glycerone phosphate from D-glucose: step 2/4. Functionally, catalyzes the reversible isomerization of glucose-6-phosphate to fructose-6-phosphate. This chain is Glucose-6-phosphate isomerase, found in Bacillus subtilis (strain 168).